We begin with the raw amino-acid sequence, 469 residues long: Swarming motility regulation sensor protein RssA (469 aa).

The next 2 membrane-spanning stretches (helical) occupy residues 12–32 and 167–187; these read IIFQVLAILLLWGLLVAWVKY and VPLLGILAAIIVTLLFTAYFS. One can recognise a Histidine kinase domain in the interval 245–459; that stretch reads DAAHELRTPI…GFIIDLPESY (215 aa). Phosphohistidine; by autocatalysis is present on His-248.

The protein resides in the cell inner membrane. The catalysed reaction is ATP + protein L-histidine = ADP + protein N-phospho-L-histidine.. Member of the two-component regulatory system RssA/RssB involved in regulation of swarming motility which has been shown to be inhibited by saturated fatty acids. RssA/RssB regulates cellular fatty acid composition, hemolysin production and cell surface topography. RssA/RssB negatively regulates the activity of SlhBA. It can also act as a negative regulator for the control of the swarming initiation. This chain is Swarming motility regulation sensor protein RssA (rssA), found in Serratia marcescens.